Here is a 267-residue protein sequence, read N- to C-terminus: MVVWVGTSFKMNKTLEEALAFARRLADADLERDPRVQRFVIPSFTAVREVKRVLTESSVKVGAQNMHWEDAGAWTGEISPLMLKDCRLDLVELGHSERREHFGETDETVGLKAAAAIRHGLTPLICIGETLQERNEGRADAVLRRQVEAALRGVDTEAGEAPILLAYEPVWAIGVNGIPATADYASERHRGIAEVAKSILGRPVPVLYGGSVNPGNCEELIGQPDIDGLFIGRSAWSVEGYLDILARVSAAIDRSSPRQTASERKLP.

The active-site Electrophile is His95. Residue Glu168 is the Proton acceptor of the active site. Residues Gly174 and Ser211 each coordinate substrate.

Belongs to the triosephosphate isomerase family. As to quaternary structure, homodimer.

The protein resides in the cytoplasm. It carries out the reaction L-erythrulose 1-phosphate = D-erythrulose 4-phosphate. Its pathway is carbohydrate metabolism; erythritol degradation. Functionally, catalyzes the isomerization of D-erythrulose-4P to L-erythrulose-1P. In Rhizobium etli (strain ATCC 51251 / DSM 11541 / JCM 21823 / NBRC 15573 / CFN 42), this protein is L-erythrulose-1-phosphate isomerase.